The following is a 202-amino-acid chain: UPF0316 protein SH1041 (202 aa).

3 consecutive transmembrane segments (helical) span residues 8 to 28 (PWSM…FLTM), 40 to 60 (MAAA…GMVM), and 66 to 86 (IQNI…GMKI).

It belongs to the UPF0316 family.

Its subcellular location is the cell membrane. This Staphylococcus haemolyticus (strain JCSC1435) protein is UPF0316 protein SH1041.